The chain runs to 2215 residues: Unconventional myosin-VIIa (2215 aa).

The Myosin motor domain occupies 65-741; it reads HGVEDMIRLG…HDMLLEVERD (677 aa). Residue 158–165 coordinates ATP; it reads GESGAGKT. The tract at residues 632–639 is actin-binding; it reads FVRCIKPN. 5 consecutive IQ domains span residues 745-765, 768-788, 791-811, 814-834, and 837-857; these read TDRV…SNFL, KSAA…KNYE, RLGF…KQYR, RQRI…KAFR, and LWAV…RLHR. The tract at residues 858–935 is SAH; it reads RLRVEYQRRL…LEQMEKARHE (78 aa). Residues 1017–1253 form the MyTH4 1 domain; sequence YTRRPLKQPL…PSWLELQATK (237 aa). The region spanning 1258-1602 is the FERM 1 domain; the sequence is IMLPVTFMDG…LVVTFLEGLR (345 aa). At Thr1563 the chain carries Phosphothreonine. Ser1569 is modified (phosphoserine). Thr1571 is modified (phosphothreonine). The region spanning 1603–1672 is the SH3 domain; it reads KRSKYVVALQ…PTDCVYVMPT (70 aa). Positions 1747 to 1896 constitute a MyTH4 2 domain; sequence HTREPLKQAL…PHLVEVEAIQ (150 aa). In terms of domain architecture, FERM 2 spans 1902-2205; the sequence is IFHKVYFPDD…SYISQMLTAM (304 aa).

This sequence belongs to the TRAFAC class myosin-kinesin ATPase superfamily. Myosin family. In terms of assembly, might homodimerize in a two headed molecule through the formation of a coiled-coil rod. Identified in a complex with USH1C and USH1G. Interacts with MYRIP. Interacts with RPE65. Interacts with CIB2. May interact with CALM. Interacts with WHRN. Interacts with PLEKHB1 (via PH domain). Interacts with PCDH15. Interacts with TWF2. Interacts with USH1G. Interacts with MYH9. Interacts (via MyTH4-FERM domains) with cytoplasmic regions of ADGRV1 and USH2A. Interacts with PDZD7 (via MyTH4-FERM domains). Interacts with CALML4. Detected in mechanosensory stereocilia of cochlea hair cells (at protein level). Expressed in the retina, cochlea, kidney and liver.

The protein resides in the cytoplasm. The protein localises to the cell cortex. Its subcellular location is the cytoskeleton. It localises to the synapse. In terms of biological role, myosins are actin-based motor molecules with ATPase activity. Unconventional myosins serve in intracellular movements. Their highly divergent tails bind to membranous compartments, which are then moved relative to actin filaments. In the retina, plays an important role in the renewal of the outer photoreceptor disks. Plays an important role in the distribution and migration of retinal pigment epithelial (RPE) melanosomes and phagosomes, and in the regulation of opsin transport in retinal photoreceptors. Mediates intracellular transport of RPE65 in the retina pigment epithelium. In the inner ear, plays an important role in differentiation, morphogenesis and organization of cochlear hair cell bundles. Motor protein that is a part of the functional network formed by USH1C, USH1G, CDH23 and MYO7A that mediates mechanotransduction in cochlear hair cells. Required for normal hearing. Involved in hair-cell vesicle trafficking of aminoglycosides, which are known to induce ototoxicity. The protein is Unconventional myosin-VIIa (Myo7a) of Mus musculus (Mouse).